An 842-amino-acid chain; its full sequence is Type VI secretion system spike protein VgrG2a (842 aa).

The interval 265–291 (RSGAGRPFSESRLRGHRRDARVASVSG) is disordered.

This sequence belongs to the VgrG protein family.

Its function is as follows. Part of the H2 type VI secretion system (H2-T6SS) specialized secretion system, which delivers several virulence factors in both prokaryotic and eukaryotic cells during infection. May form the spike at the tip of the elongating tube formed by haemolysin co-regulated protein 2a/Hcp2a. In turn, may allow the delivery of the Tle4 antibacterial toxin to target cells where it exerts its toxicity. Also promotes the release of VgrG2b toxin to the host cell. This is Type VI secretion system spike protein VgrG2a from Pseudomonas aeruginosa (strain ATCC 15692 / DSM 22644 / CIP 104116 / JCM 14847 / LMG 12228 / 1C / PRS 101 / PAO1).